A 455-amino-acid polypeptide reads, in one-letter code: Peroxisomal membrane protein PEX3 (455 aa).

Positions threonine 113–glycine 125 are enriched in polar residues. The interval threonine 113–proline 135 is disordered. Residues phenylalanine 155 to leucine 171 traverse the membrane as a helical segment.

The protein belongs to the peroxin-3 family. As to quaternary structure, component of the peroxisomal docking complex, composed of at least PEX3, PEX13, PEX14 and PEX17. Component of the peroxisomal translocation complex, composed of at least PEX3, PEX2, PEX10 and PEX12. Interacts with PEX19. Interacts with the pexophagy receptor ATG30.

It localises to the peroxisome membrane. Its function is as follows. Peroxisomal membrane protein required for peroxisome biosynthesis. Shared component of both the peroxisomal docking complex and the peroxisomal translocation complex. The two types of peroxisomal matrix targeting signals, PTS1 and PTS2, are first recognized in the cytosol by their receptors PEX5 and PEX7, respectively, which then carry the cargo to the peroxisomal membrane. The peroxisomal targeting signal (PTS) receptor-cargo complexes interact with peroxisomal membrane protein (PMP) components of the docking complex. They have then additional downstream interactions with the translocation complex, leading to the transport of fully folded and oligomerized cargo into the peroxisome matrix. PEX3 acts as an anchoring site for PEX19 on the peroxisomal membrane and thus plays a crucial role in the assembly of the peroxisomal translocation complex. Is also essential for the interaction between the two complexes. Finally. PEX3 activates selective autophagy of peroxisomes (pexophagy) via interaction with the pexophagy receptor ATG30. This chain is Peroxisomal membrane protein PEX3, found in Komagataella phaffii (strain GS115 / ATCC 20864) (Yeast).